Here is a 328-residue protein sequence, read N- to C-terminus: DNA-directed RNA polymerase subunit alpha (328 aa).

The tract at residues 1–234 (MQNSPTEYLK…GQLSVFADLE (234 aa)) is alpha N-terminal domain (alpha-NTD). An alpha C-terminal domain (alpha-CTD) region spans residues 248-328 (VDPILLRPVD…NWPPAGLEKV (81 aa)).

This sequence belongs to the RNA polymerase alpha chain family. As to quaternary structure, homodimer. The RNAP catalytic core consists of 2 alpha, 1 beta, 1 beta' and 1 omega subunit. When a sigma factor is associated with the core the holoenzyme is formed, which can initiate transcription.

It catalyses the reaction RNA(n) + a ribonucleoside 5'-triphosphate = RNA(n+1) + diphosphate. In terms of biological role, DNA-dependent RNA polymerase catalyzes the transcription of DNA into RNA using the four ribonucleoside triphosphates as substrates. This chain is DNA-directed RNA polymerase subunit alpha, found in Methylobacillus flagellatus (strain ATCC 51484 / DSM 6875 / VKM B-1610 / KT).